We begin with the raw amino-acid sequence, 354 residues long: Ferredoxin--NADP reductase 2 (354 aa).

FAD is bound by residues Thr-14, Asp-33, Gln-41, Tyr-46, Ala-86, Phe-121, Asp-289, and Thr-330.

Belongs to the ferredoxin--NADP reductase type 2 family. As to quaternary structure, homodimer. FAD serves as cofactor.

The enzyme catalyses 2 reduced [2Fe-2S]-[ferredoxin] + NADP(+) + H(+) = 2 oxidized [2Fe-2S]-[ferredoxin] + NADPH. In Christiangramia forsetii (strain DSM 17595 / CGMCC 1.15422 / KT0803) (Gramella forsetii), this protein is Ferredoxin--NADP reductase 2.